We begin with the raw amino-acid sequence, 291 residues long: Ribosomal RNA small subunit methyltransferase H (291 aa).

Residues 31 to 33 (GGH), Asp-50, Phe-77, Asp-98, and Gln-105 each bind S-adenosyl-L-methionine.

This sequence belongs to the methyltransferase superfamily. RsmH family.

The protein resides in the cytoplasm. It catalyses the reaction cytidine(1402) in 16S rRNA + S-adenosyl-L-methionine = N(4)-methylcytidine(1402) in 16S rRNA + S-adenosyl-L-homocysteine + H(+). Its function is as follows. Specifically methylates the N4 position of cytidine in position 1402 (C1402) of 16S rRNA. The protein is Ribosomal RNA small subunit methyltransferase H of Endomicrobium trichonymphae.